The sequence spans 409 residues: NADH-quinone oxidoreductase subunit D (409 aa).

The protein belongs to the complex I 49 kDa subunit family. As to quaternary structure, NDH-1 is composed of 14 different subunits. Subunits NuoB, C, D, E, F, and G constitute the peripheral sector of the complex.

It is found in the cell inner membrane. The catalysed reaction is a quinone + NADH + 5 H(+)(in) = a quinol + NAD(+) + 4 H(+)(out). In terms of biological role, NDH-1 shuttles electrons from NADH, via FMN and iron-sulfur (Fe-S) centers, to quinones in the respiratory chain. The immediate electron acceptor for the enzyme in this species is believed to be ubiquinone. Couples the redox reaction to proton translocation (for every two electrons transferred, four hydrogen ions are translocated across the cytoplasmic membrane), and thus conserves the redox energy in a proton gradient. This is NADH-quinone oxidoreductase subunit D from Helicobacter pylori (strain G27).